The primary structure comprises 210 residues: FMN-dependent NADH:quinone oxidoreductase (210 aa).

FMN contacts are provided by residues 17–19 and 148–151; these read SCS and SSGG.

The protein belongs to the azoreductase type 1 family. In terms of assembly, homodimer. Requires FMN as cofactor.

It carries out the reaction 2 a quinone + NADH + H(+) = 2 a 1,4-benzosemiquinone + NAD(+). The enzyme catalyses N,N-dimethyl-1,4-phenylenediamine + anthranilate + 2 NAD(+) = 2-(4-dimethylaminophenyl)diazenylbenzoate + 2 NADH + 2 H(+). In terms of biological role, quinone reductase that provides resistance to thiol-specific stress caused by electrophilic quinones. Also exhibits azoreductase activity. Catalyzes the reductive cleavage of the azo bond in aromatic azo compounds to the corresponding amines. In Geotalea uraniireducens (strain Rf4) (Geobacter uraniireducens), this protein is FMN-dependent NADH:quinone oxidoreductase.